A 577-amino-acid polypeptide reads, in one-letter code: Phosphatidylinositol/phosphatidylcholine transfer protein SFH14 (577 aa).

The disordered stretch occupies residues 1–22 (MSGREQTGEKLSDSEYIEEEPR). One can recognise a CRAL-TRIO domain in the interval 136 to 311 (ELDEVTRHYP…FLGGLCKCPN (176 aa)). Positions 364 to 383 (ETLKEEPEPEEYYSSTGSRS) are disordered. Positions 523–550 (EANEKLLAESLERIKSLELDLDKTKSVL) form a coiled coil.

The protein belongs to the SFH family.

It localises to the golgi apparatus membrane. The protein resides in the cell membrane. Functionally, required for transport of secretory proteins from the Golgi complex. Catalyzes the transfer of phosphatidylinositol and phosphatidylcholine between membranes in vitro. In Arabidopsis thaliana (Mouse-ear cress), this protein is Phosphatidylinositol/phosphatidylcholine transfer protein SFH14 (SFH14).